A 244-amino-acid chain; its full sequence is Probable transcriptional regulatory protein XF_1906 (244 aa).

The protein belongs to the TACO1 family.

It is found in the cytoplasm. This is Probable transcriptional regulatory protein XF_1906 from Xylella fastidiosa (strain 9a5c).